The chain runs to 238 residues: Ribonuclease PH (238 aa).

Phosphate is bound by residues Arg-86 and 124–126 (GTR).

The protein belongs to the RNase PH family. In terms of assembly, homohexameric ring arranged as a trimer of dimers.

It catalyses the reaction tRNA(n+1) + phosphate = tRNA(n) + a ribonucleoside 5'-diphosphate. Phosphorolytic 3'-5' exoribonuclease that plays an important role in tRNA 3'-end maturation. Removes nucleotide residues following the 3'-CCA terminus of tRNAs; can also add nucleotides to the ends of RNA molecules by using nucleoside diphosphates as substrates, but this may not be physiologically important. Probably plays a role in initiation of 16S rRNA degradation (leading to ribosome degradation) during starvation. The polypeptide is Ribonuclease PH (Caulobacter vibrioides (strain ATCC 19089 / CIP 103742 / CB 15) (Caulobacter crescentus)).